The following is a 49-amino-acid chain: Large ribosomal subunit protein eL40 (49 aa).

Belongs to the eukaryotic ribosomal protein eL40 family.

This Archaeoglobus fulgidus (strain ATCC 49558 / DSM 4304 / JCM 9628 / NBRC 100126 / VC-16) protein is Large ribosomal subunit protein eL40.